A 225-amino-acid polypeptide reads, in one-letter code: Putative tyrosine-protein phosphatase OCA1 (225 aa).

Residues M1–N11 show a composition bias toward acidic residues. The tract at residues M1–T24 is disordered. Residues L12–T24 show a composition bias toward polar residues. Positions N42–K196 constitute a Tyrosine-protein phosphatase domain. The Phosphocysteine intermediate role is filled by C138.

It belongs to the protein-tyrosine phosphatase family.

The protein localises to the cytoplasm. The enzyme catalyses O-phospho-L-tyrosyl-[protein] + H2O = L-tyrosyl-[protein] + phosphate. Its function is as follows. Putative tyrosine-protein phosphatase required for protection against superoxide stress. The chain is Putative tyrosine-protein phosphatase OCA1 (OCA1) from Eremothecium gossypii (strain ATCC 10895 / CBS 109.51 / FGSC 9923 / NRRL Y-1056) (Yeast).